The following is a 215-amino-acid chain: tRNA (guanine-N(7)-)-methyltransferase (215 aa).

S-adenosyl-L-methionine is bound by residues glutamate 44, glutamate 69, aspartate 96, and aspartate 118. Aspartate 118 is a catalytic residue. Substrate is bound by residues lysine 122, aspartate 154, and 191 to 194 (TEYE).

The protein belongs to the class I-like SAM-binding methyltransferase superfamily. TrmB family.

It carries out the reaction guanosine(46) in tRNA + S-adenosyl-L-methionine = N(7)-methylguanosine(46) in tRNA + S-adenosyl-L-homocysteine. The protein operates within tRNA modification; N(7)-methylguanine-tRNA biosynthesis. Functionally, catalyzes the formation of N(7)-methylguanine at position 46 (m7G46) in tRNA. The sequence is that of tRNA (guanine-N(7)-)-methyltransferase from Exiguobacterium sp. (strain ATCC BAA-1283 / AT1b).